A 39-amino-acid polypeptide reads, in one-letter code: MTASLANYLSSLVWAAVIVVIPAAVALVLISQNDQMYRK.

A helical membrane pass occupies residues 10-30; that stretch reads SSLVWAAVIVVIPAAVALVLI.

The protein belongs to the PsbX family. Type 1 subfamily. As to quaternary structure, PSII is composed of 1 copy each of membrane proteins PsbA, PsbB, PsbC, PsbD, PsbE, PsbF, PsbH, PsbI, PsbJ, PsbK, PsbL, PsbM, PsbT, PsbX, PsbY, Psb30/Ycf12, peripheral proteins PsbO, CyanoQ (PsbQ), PsbU, PsbV and a large number of cofactors. It forms dimeric complexes.

The protein resides in the cellular thylakoid membrane. In terms of biological role, involved in the binding and/or turnover of quinones at the Q(B) site of photosystem II (PSII). PSII is a light-driven water plastoquinone oxidoreductase, using light energy to abstract electrons from H(2)O, generating a proton gradient subsequently used for ATP formation. The sequence is that of Photosystem II reaction center protein X from Prochlorococcus marinus (strain MIT 9303).